The chain runs to 519 residues: Putative thymidine phosphorylase (519 aa).

This sequence belongs to the thymidine/pyrimidine-nucleoside phosphorylase family. Type 2 subfamily.

The catalysed reaction is thymidine + phosphate = 2-deoxy-alpha-D-ribose 1-phosphate + thymine. The chain is Putative thymidine phosphorylase from Maricaulis maris (strain MCS10) (Caulobacter maris).